A 493-amino-acid chain; its full sequence is Vacuolar-processing enzyme (493 aa).

The N-terminal stretch at 1–34 (MAVHRSLLNKPTWCRVAFWWWMLVMVMRIQGTNG) is a signal peptide. A propeptide spanning residues 35-53 (KEQDSVIKLPTQEVDAESD) is cleaved from the precursor. His176 is a catalytic residue. Residue Cys218 is the Nucleophile of the active site. Cys251 and Cys265 are oxidised to a cystine. Residue Asn318 is glycosylated (N-linked (GlcNAc...) asparagine). 2 disulfides stabilise this stretch: Cys429-Cys459 and Cys441-Cys476.

This sequence belongs to the peptidase C13 family.

In terms of biological role, asparagine-specific endopeptidase involved in the processing of vacuolar seed protein precursors into the mature forms. This is Vacuolar-processing enzyme from Phaseolus vulgaris (Kidney bean).